A 476-amino-acid polypeptide reads, in one-letter code: Adenosylhomocysteinase (476 aa).

Thr67, Asp142, and Glu202 together coordinate substrate. NAD(+) is bound at residue 203–205 (TTT). Lys232 and Asp236 together coordinate substrate. NAD(+) contacts are provided by residues Asn237, 266–271 (GYGDVG), Glu289, Asn324, 345–347 (IGH), and Asn390.

It belongs to the adenosylhomocysteinase family. It depends on NAD(+) as a cofactor.

It localises to the cytoplasm. It carries out the reaction S-adenosyl-L-homocysteine + H2O = L-homocysteine + adenosine. It participates in amino-acid biosynthesis; L-homocysteine biosynthesis; L-homocysteine from S-adenosyl-L-homocysteine: step 1/1. In terms of biological role, may play a key role in the regulation of the intracellular concentration of adenosylhomocysteine. In Synechococcus sp. (strain WH7803), this protein is Adenosylhomocysteinase.